The following is a 344-amino-acid chain: Sorting nexin-16 (344 aa).

The segment covering 1-10 (MATPYVPVPM) has biased composition (pro residues). Disordered regions lie at residues 1 to 49 (MATP…DSSV) and 83 to 105 (SIEY…NWED). Polar residues predominate over residues 14–26 (NSASSFTNNRNQR). Positions 27 to 40 (SSSFGSVSTSSNSS) are enriched in low complexity. Basic and acidic residues predominate over residues 88–105 (ARPRDTEEQHPDALNWED). One can recognise a PX domain in the interval 105–218 (DRPSTPTILG…EFLCLDDPPG (114 aa)). Arg-144, Thr-146, and Arg-184 together coordinate a 1,2-diacyl-sn-glycero-3-phospho-(1D-myo-inositol-3-phosphate). The residue at position 222 (Ser-222) is a Phosphoserine. Positions 223–278 (LEESRAFCETLEETNYHLQRELLEKQKEVESLKKLLGEKQLHIDALETRIRTLSLE) form a coiled coil.

Belongs to the sorting nexin family. In terms of assembly, homooligomer. Interacts with EGFR.

Its subcellular location is the early endosome membrane. The protein resides in the late endosome membrane. It localises to the cytoplasm. The protein localises to the lysosome. Functionally, may be involved in several stages of intracellular trafficking. Plays a role in protein transport from early to late endosomes. Plays a role in protein transport to the lysosome. Promotes degradation of EGFR after EGF signaling. The chain is Sorting nexin-16 (Snx16) from Rattus norvegicus (Rat).